We begin with the raw amino-acid sequence, 356 residues long: HTH-type transcriptional regulator AglR (356 aa).

The HTH lacI-type domain occupies 1–57 (MPVNLKQLAELLGLSQTTVSRALNGYPEVNAETRARVLEAVRETGYRPNRAAQRLAT). Residues 5–24 (LKQLAELLGLSQTTVSRALN) constitute a DNA-binding region (H-T-H motif). Residues 337–356 (TGPAPDRSPLPNPSPQVGGA) form a disordered region.

Probable regulatory protein for the binding-protein-dependent transport system for alpha-glucosides such as sucrose, maltose and trehalose. This Rhizobium meliloti (strain 1021) (Ensifer meliloti) protein is HTH-type transcriptional regulator AglR (aglR).